The sequence spans 180 residues: Cytokinin-beta-glucosidase 2 (180 aa).

Its function is as follows. Hydrolyzes cytokinin glucosides thus liberating free cytokinins. This chain is Cytokinin-beta-glucosidase 2 (ROLC2), found in Panax ginseng (Korean ginseng).